The primary structure comprises 194 residues: dCTP deaminase (194 aa).

Residues 110 to 115 (RSSLAR), Asp-128, 136 to 138 (VLE), Tyr-171, Lys-178, and Gln-182 contribute to the dCTP site. The Proton donor/acceptor role is filled by Glu-138.

Belongs to the dCTP deaminase family. As to quaternary structure, homotrimer.

It carries out the reaction dCTP + H2O + H(+) = dUTP + NH4(+). Its pathway is pyrimidine metabolism; dUMP biosynthesis; dUMP from dCTP (dUTP route): step 1/2. Catalyzes the deamination of dCTP to dUTP. The chain is dCTP deaminase from Haemophilus ducreyi (strain 35000HP / ATCC 700724).